Here is a 303-residue protein sequence, read N- to C-terminus: Growth/differentiation factor 15 (303 aa).

Positions methionine 1–serine 30 are cleaved as a signal peptide. Positions tryptophan 31–arginine 188 are excised as a propeptide. N-linked (GlcNAc...) asparagine glycosylation is present at asparagine 71. Disulfide bonds link cysteine 198–cysteine 205, cysteine 206–cysteine 269, cysteine 235–cysteine 300, and cysteine 239–cysteine 302.

This sequence belongs to the TGF-beta family. Homodimer; disulfide-linked. Interacts with GFRAL and RET; ligand of GFRAL, which mediates GDF15 internalization and cellular signaling through interaction with RET via the formation of a 2:2:2 ternary complex composed of GDF15, GFRAL and RET. As to expression, detected in plasma (at protein level).

The protein resides in the secreted. Hormone produced in response to various stresses to confer information about those stresses to the brain, and trigger an aversive response, characterized by nausea and/or loss of appetite. The aversive response is both required to reduce continuing exposure to those stresses at the time of exposure and to promote avoidance behavior in the future. Acts by binding to its receptor, GFRAL, activating GFRAL-expressing neurons localized in the area postrema and nucleus tractus solitarius of the brainstem. It then triggers the activation of neurons localized within the parabrachial nucleus and central amygdala, which constitutes part of the 'emergency circuit' that shapes responses to stressful conditions. The GDF15-GFRAL signal induces expression of genes involved in metabolism, such as lipid metabolism in adipose tissues. Contributes to the effect of metformin, an anti-diabetic drug, on appetite reduction and weight loss: produced in the kidney in response to metformin treatment, thereby activating the GDF15-GFRAL response, leading to reduced appetite and weight. Required for avoidance behavior in response to food allergens: induced downstream of mast cell activation to promote aversion and minimize harmful effects of exposure to noxious substances. Produced in response to anticancer drugs, such as camptothecin or cisplatin, promoting nausea and contributing to malnutrition. Overproduced in many cancers, promoting anorexia in cancer (cachexia). Responsible for the risk of nausea during pregnancy: high levels of GDF15 during pregnancy, mostly originating from embryos, are associated with increased nausea. Maternal sensitivity to nausea is probably determined by pre-pregnancy exposure to GDF15, females with naturally high level of GDF15 being less susceptible to nausea than female rats with low levels of GDF15 before pregnancy. Promotes metabolic adaptation in response to systemic inflammation caused by bacterial and viral infections in order to promote tissue tolerance and prevent tissue damage. Required for tissue tolerance in response to myocardial infarction by acting as an inhibitor of leukocyte integring activation, thereby protecting against cardiac rupture. Inhibits growth hormone signaling on hepatocytes. The protein is Growth/differentiation factor 15 of Rattus norvegicus (Rat).